The sequence spans 371 residues: Otolith matrix protein 1 (371 aa).

A signal peptide spans 1–21 (MDLPGGHLAVVLFLFVLVSMS). Residues 27–367 (IRWCTVSDAE…YTTILRAFEC (341 aa)) enclose the Transferrin-like domain.

In terms of assembly, interacts with OTOL1.

It localises to the secreted. Functionally, required for normal otolith growth and deposition of otolin-1 in the otolith. The protein is Otolith matrix protein 1 (otomp) of Danio rerio (Zebrafish).